Reading from the N-terminus, the 147-residue chain is 3-dehydroquinate dehydratase (147 aa).

Tyrosine 23 serves as the catalytic Proton acceptor. Substrate-binding residues include asparagine 75, histidine 81, and aspartate 88. Histidine 101 serves as the catalytic Proton donor. Residues 102–103 (LS) and arginine 112 each bind substrate.

This sequence belongs to the type-II 3-dehydroquinase family. In terms of assembly, homododecamer.

The enzyme catalyses 3-dehydroquinate = 3-dehydroshikimate + H2O. It functions in the pathway metabolic intermediate biosynthesis; chorismate biosynthesis; chorismate from D-erythrose 4-phosphate and phosphoenolpyruvate: step 3/7. In terms of biological role, catalyzes a trans-dehydration via an enolate intermediate. The chain is 3-dehydroquinate dehydratase from Stutzerimonas stutzeri (strain A1501) (Pseudomonas stutzeri).